We begin with the raw amino-acid sequence, 461 residues long: Anthocyanidin 3-O-glucoside 5-O-glucosyltransferase (461 aa).

The N-terminal stretch at 1-15 (MSRAHVLLATFPAQG) is a signal peptide. His-16 (proton acceptor) is an active-site residue. Residue His-16 participates in an anthocyanidin binding. The UDP-alpha-D-glucose site is built by Gln-338, His-353, Trp-356, Asn-357, Ser-358, Glu-361, Asp-377, and Gln-378.

The protein belongs to the UDP-glycosyltransferase family.

It carries out the reaction an anthocyanidin 3-O-beta-D-glucoside + UDP-alpha-D-glucose = an anthocyanidin 3,5-di-O-beta-D-glucoside + UDP + 2 H(+). It participates in pigment biosynthesis; anthocyanin biosynthesis. Its function is as follows. Catalyzes the glucosylation at the O-5 position of anthocyanidin 3-glucosides to form anthocyanidin 3,5-di-O-glucosides using UDP-glucose as sugar donor. Anthocyanidin 3,5-di-O-glucosides are molecules that are responsible for pigmentation. Also acts on anthocyanidin 3-O-(6-O-malonylglucoside). Much less active with hydroxycinnamoylglucose derivatives. No activity in the absence of the 3-O-glucoside group. The sequence is that of Anthocyanidin 3-O-glucoside 5-O-glucosyltransferase (HGT8) from Verbena hybrida (Garden vervain).